Reading from the N-terminus, the 388-residue chain is Flavin-dependent monooxygenase (388 aa).

Residues 26–27 (PV) and 45–48 (YERD) each bind FAD. Arginine 54 is a binding site for NADPH. Residues aspartate 61, arginine 117, and leucine 139 each coordinate FAD. Residues glutamine 192 and arginine 213 each coordinate substrate. FAD is bound by residues aspartate 311 and 321–324 (GQGV).

Belongs to the aromatic-ring hydroxylase family. TetX subfamily. Monomer. The cofactor is FAD.

The protein resides in the cytoplasm. It carries out the reaction a tetracycline + NADPH + O2 + H(+) = an 11a-hydroxytetracycline + NADP(+) + H2O. It catalyses the reaction tetracycline + NADPH + O2 + H(+) = 11a-hydroxytetracycline + NADP(+) + H2O. The enzyme catalyses tigecycline + NADPH + O2 + H(+) = 11a-hydroxytigecycline + NADP(+) + H2O. The catalysed reaction is oxytetracycline + NADPH + O2 + H(+) = 11a-hydroxy-oxytetracycline + NADP(+) + H2O. With respect to regulation, anhydrotetracycline, a poor substrate, prevents tetracycline degradation in vitro. In terms of biological role, an FAD-requiring monooxygenase active on tetracycline antibiotic derivatives, which leads to their inactivation. Hydroxylates carbon 11a of oxytetracycline and tigecycline. Acts on many tetracycline analogs (chlorotetracycline, demeclocycline, doxycycline, minocycline, oxytetracyclinee), probably by monooxygenization. Tigecycline, a new generation tetracycline antibiotic, is rendered less effective against E.coli by this monooxygenation, is much weaker at inhibiting translation in vitro and binds Mg(2+) considerably less well. Expression in E.coli BW25113 reduces its growth rate about 5%. The reaction probably proceeds by FAD reduction by NADPH and, second, hydroxylation of antibiotic in a ping-pong mechanism. Degrades chlortetracycline, probably by monooxygenation. Slowly oxidizes anhydrotetracycline, the final substrate in tetracycline biosynthesis. The protein is Flavin-dependent monooxygenase of Bacteroides thetaiotaomicron.